We begin with the raw amino-acid sequence, 497 residues long: Taxane 10-beta-hydroxylase (497 aa).

A heme-binding site is contributed by Cys-443.

It belongs to the cytochrome P450 family. Requires heme as cofactor.

The catalysed reaction is taxa-4(20),11-dien-5alpha-yl acetate + reduced [NADPH--hemoprotein reductase] + O2 = 10beta-hydroxytaxa-4(20),11-dien-5alpha-yl acetate + oxidized [NADPH--hemoprotein reductase] + H2O + H(+). Its pathway is alkaloid biosynthesis; taxol biosynthesis; 10-deacetyl-2-debenzoylbaccatin III from taxa-4(20),11-dien-5alpha-ol: step 2/3. Its function is as follows. Involved in the transformation of a taxadienyl acetate by hydroxylation at C10 to yield taxadien-5-alpha-acetoxy-10-beta-ol. The sequence is that of Taxane 10-beta-hydroxylase (CYP725A1) from Taxus cuspidata (Japanese yew).